Here is a 75-residue protein sequence, read N- to C-terminus: Small ribosomal subunit protein bS18 (75 aa).

The protein belongs to the bacterial ribosomal protein bS18 family. Part of the 30S ribosomal subunit. Forms a tight heterodimer with protein bS6.

In terms of biological role, binds as a heterodimer with protein bS6 to the central domain of the 16S rRNA, where it helps stabilize the platform of the 30S subunit. This chain is Small ribosomal subunit protein bS18, found in Pseudoalteromonas translucida (strain TAC 125).